A 380-amino-acid chain; its full sequence is Cytochrome b (380 aa).

4 helical membrane passes run 33 to 53, 77 to 98, 113 to 133, and 178 to 198; these read FGSL…FLAM, WLIR…YLHV, WNIG…GYVL, and FFAF…IHLL. The heme b site is built by His83 and His97. Heme b contacts are provided by His182 and His196. A ubiquinone is bound at residue His201. The next 4 membrane-spanning stretches (helical) occupy residues 226–246, 288–308, 320–340, and 347–367; these read YKDL…ALFS, LGGV…PMLH, LSQI…WIGG, and FVLI…IALP.

It belongs to the cytochrome b family. The cytochrome bc1 complex contains 3 respiratory subunits (MT-CYB, CYC1 and UQCRFS1), 2 core proteins (UQCRC1 and UQCRC2) and probably 6 low-molecular weight proteins. The cofactor is heme b.

It localises to the mitochondrion inner membrane. Functionally, component of the ubiquinol-cytochrome c reductase complex (complex III or cytochrome b-c1 complex) that is part of the mitochondrial respiratory chain. The b-c1 complex mediates electron transfer from ubiquinol to cytochrome c. Contributes to the generation of a proton gradient across the mitochondrial membrane that is then used for ATP synthesis. This Acipenser persicus (Persian sturgeon) protein is Cytochrome b (mt-cyb).